We begin with the raw amino-acid sequence, 230 residues long: Large ribosomal subunit protein uL1 (230 aa).

The protein belongs to the universal ribosomal protein uL1 family. In terms of assembly, part of the 50S ribosomal subunit.

Its function is as follows. Binds directly to 23S rRNA. The L1 stalk is quite mobile in the ribosome, and is involved in E site tRNA release. In terms of biological role, protein L1 is also a translational repressor protein, it controls the translation of the L11 operon by binding to its mRNA. The polypeptide is Large ribosomal subunit protein uL1 (Leuconostoc citreum (strain KM20)).